A 759-amino-acid polypeptide reads, in one-letter code: Catalase-peroxidase (759 aa).

Positions 1 to 24 (MTQDKCPFKEQPSQPNFAGGGTSN) are disordered. A cross-link (tryptophyl-tyrosyl-methioninium (Trp-Tyr) (with M-268)) is located at residues 96 to 242 (WHSAGTYRVF…LAAAHMGLIY (147 aa)). Residue His97 is the Proton acceptor of the active site. Residues 242 to 268 (YVNPEGPDGNPDPIAAAHDIRDTFGRM) constitute a cross-link (tryptophyl-tyrosyl-methioninium (Tyr-Met) (with W-96)). Heme b is bound at residue His283.

This sequence belongs to the peroxidase family. Peroxidase/catalase subfamily. As to quaternary structure, homodimer or homotetramer. Requires heme b as cofactor. In terms of processing, formation of the three residue Trp-Tyr-Met cross-link is important for the catalase, but not the peroxidase activity of the enzyme.

Its subcellular location is the cytoplasm. The catalysed reaction is H2O2 + AH2 = A + 2 H2O. It carries out the reaction 2 H2O2 = O2 + 2 H2O. In terms of biological role, bifunctional enzyme with both catalase and broad-spectrum peroxidase activity. The sequence is that of Catalase-peroxidase from Neosartorya fischeri (strain ATCC 1020 / DSM 3700 / CBS 544.65 / FGSC A1164 / JCM 1740 / NRRL 181 / WB 181) (Aspergillus fischerianus).